The following is a 204-amino-acid chain: Terpene cyclase ausL (204 aa).

Transmembrane regions (helical) follow at residues 19-39, 49-69, 75-95, 114-134, and 138-158; these read LSEM…LAMV, AIAV…AWIY, HWQG…AATL, LVLL…CLAL, and GALG…SAAV.

The protein belongs to the paxB family.

The protein resides in the membrane. Its pathway is secondary metabolite biosynthesis; terpenoid biosynthesis. Functionally, terpene cyclase; part of the gene cluster B that mediates the biosynthesis of austinol and dehydroaustinol, two fungal meroterpenoids. The first step of the pathway is the synthesis of 3,5-dimethylorsellinic acid by the polyketide synthase ausA. 3,5-dimethylorsellinic acid is then prenylated by the polyprenyl transferase ausN. Further epoxidation by the FAD-dependent monooxygenase ausM and cyclization by the probable terpene cyclase ausL lead to the formation of protoaustinoid A. Protoaustinoid A is then oxidized to spiro-lactone preaustinoid A3 by the combined action of the FAD-binding monooxygenases ausB and ausC, and the dioxygenase ausE. Acid-catalyzed keto-rearrangement and ring contraction of the tetraketide portion of preaustinoid A3 by ausJ lead to the formation of preaustinoid A4. The aldo-keto reductase ausK, with the help of ausH, is involved in the next step by transforming preaustinoid A4 into isoaustinone which is in turn hydroxylated by the P450 monooxygenase ausI to form austinolide. Finally, the cytochrome P450 monooxygenase ausG modifies austinolide to austinol. Austinol can be further modified to dehydroaustinol which forms a diffusible complex with diorcinol that initiates conidiation. Due to genetic rearrangements of the clusters and the subsequent loss of some enzymes, the end products of the Emericella nidulans austinoid biosynthesis clusters are austinol and dehydroaustinol, even if additional enzymes, such as the O-acetyltransferase ausQ and the cytochrome P450 monooxygenase ausR are still functional. The protein is Terpene cyclase ausL of Emericella nidulans (strain FGSC A4 / ATCC 38163 / CBS 112.46 / NRRL 194 / M139) (Aspergillus nidulans).